Reading from the N-terminus, the 201-residue chain is Ras-related protein Rab-1B (201 aa).

Met-1 bears the N-acetylmethionine mark. Residues Ser-17, Gly-18, Val-19, Gly-20, Lys-21, Ser-22, Cys-23, Tyr-33, Thr-34, Glu-35, Ser-36, Ser-39, and Thr-40 each coordinate GTP. Residue Ser-22 coordinates Mg(2+). The short motif at 30–45 (DDTYTESYISTIGVDF) is the Switch 1 element. Residues Thr-40 and Asp-63 each contribute to the Mg(2+) site. The switch 2 region; required for interaction with REP1/CHM stretch occupies residues 64 to 83 (TAGQERFRTITSSYYRGAHG). Residues 65–80 (AGQERFRTITSSYYRG) carry the Switch 2 motif. Residues Gly-66, Asn-121, Lys-122, Asp-124, Ser-151, Ala-152, and Lys-153 each contribute to the GTP site. Positions 174–201 (GPGAASGGERPNLKIDSTPVKPAGGGCC) are disordered. 2 S-geranylgeranyl cysteine lipidation sites follow: Cys-200 and Cys-201. Cys-201 is subject to Cysteine methyl ester.

Belongs to the small GTPase superfamily. Rab family. Interacts with MICAL1 and MICAL2. Interacts (in GTP-bound form) with MICALCL, MICAL1 and MILCAL3. Interacts with GDI1; the interaction requires the GDP-bound state. Interacts with CHM/REP1; the interaction requires the GDP-bound form and is necessary for prenylation by GGTase II. Interacts with RabGAP TBC1D20. Interacts (in GDP-bound form) with lipid phosphatase MTMR6 (via GRAM domain); the interaction regulates MTMR6 recruitment to the endoplasmic reticulum-Golgi intermediate compartment. Interacts (in GDP-bound form) with lipid phosphatase MTMR7. Mg(2+) is required as a cofactor. Prenylated; by GGTase II, only after interaction of the substrate with Rab escort protein 1 (REP1).

It is found in the cytoplasm. The protein localises to the membrane. The protein resides in the preautophagosomal structure membrane. Its subcellular location is the perinuclear region. The catalysed reaction is GTP + H2O = GDP + phosphate + H(+). Regulated by guanine nucleotide exchange factors (GEFs) which promote the exchange of bound GDP for free GTP. Regulated by GTPase activating proteins (GAPs) including TBC1D20 which increases the GTP hydrolysis activity. Inhibited by GDP dissociation inhibitors (GDIs). Its function is as follows. The small GTPases Rab are key regulators of intracellular membrane trafficking, from the formation of transport vesicles to their fusion with membranes. Rabs cycle between an inactive GDP-bound form and an active GTP-bound form that is able to recruit to membranes different set of downstream effectors directly responsible for vesicle formation, movement, tethering and fusion. Plays a role in the initial events of the autophagic vacuole development which take place at specialized regions of the endoplasmic reticulum. Regulates vesicular transport between the endoplasmic reticulum and successive Golgi compartments. Required to modulate the compacted morphology of the Golgi. Promotes the recruitment of lipid phosphatase MTMR6 to the endoplasmic reticulum-Golgi intermediate compartment. The polypeptide is Ras-related protein Rab-1B (RAB1B) (Macaca fascicularis (Crab-eating macaque)).